The sequence spans 690 residues: Elongation factor G (690 aa).

The tr-type G domain occupies 8 to 283 (EDYRNFGIMA…AVVDYLPSPI (276 aa)). GTP contacts are provided by residues 17–24 (AHIDAGKT), 81–85 (DTPGH), and 135–138 (NKMD).

This sequence belongs to the TRAFAC class translation factor GTPase superfamily. Classic translation factor GTPase family. EF-G/EF-2 subfamily.

The protein resides in the cytoplasm. Catalyzes the GTP-dependent ribosomal translocation step during translation elongation. During this step, the ribosome changes from the pre-translocational (PRE) to the post-translocational (POST) state as the newly formed A-site-bound peptidyl-tRNA and P-site-bound deacylated tRNA move to the P and E sites, respectively. Catalyzes the coordinated movement of the two tRNA molecules, the mRNA and conformational changes in the ribosome. The polypeptide is Elongation factor G (Bradyrhizobium diazoefficiens (strain JCM 10833 / BCRC 13528 / IAM 13628 / NBRC 14792 / USDA 110)).